A 192-amino-acid chain; its full sequence is Large ribosomal subunit protein uL6 (192 aa).

The protein belongs to the universal ribosomal protein uL6 family. In terms of assembly, part of the 50S ribosomal subunit.

In terms of biological role, this protein binds to the 23S rRNA, and is important in its secondary structure. It is located near the subunit interface in the base of the L7/L12 stalk, and near the tRNA binding site of the peptidyltransferase center. The protein is Large ribosomal subunit protein uL6 of Nanoarchaeum equitans (strain Kin4-M).